A 36-amino-acid chain; its full sequence is Cytochrome b6-f complex subunit 7 (36 aa).

Residues 5–25 (IFFVAGLVFVLTLVGMAIGFG) traverse the membrane as a helical segment.

It belongs to the PetM family. The 4 large subunits of the cytochrome b6-f complex are cytochrome b6, subunit IV (17 kDa polypeptide, PetD), cytochrome f and the Rieske protein, while the 4 small subunits are PetG, PetL, PetM and PetN. The complex functions as a dimer.

The protein localises to the cell inner membrane. Functionally, component of the cytochrome b6-f complex, which mediates electron transfer between photosystem II (PSII) and photosystem I (PSI), cyclic electron flow around PSI, and state transitions. The chain is Cytochrome b6-f complex subunit 7 from Gloeobacter violaceus (strain ATCC 29082 / PCC 7421).